The sequence spans 411 residues: MAANATMATSGSARKRLLKEEDMTKVEFETSEEVDVTPTFDTMGLREDLLRGIYAYGFEKPSAIQQRAIKQIIKGRDVIAQSQSGTGKTATFSVSVLQCLDIQVRETQALILAPTRELAVQIQKGLLALGDYMNVQCHACIGGTNVGEDIRKLDYGQHVVAGTPGRVFDMIRRRSLRTRAIKMLVLDEADEMLNKGFKEQIYDVYRYLPPATQVVLISATLPHEILEMTNKFMTDPIRILVKRDELTLEGIKQFFVAVEREEWKFDTLCDLYDTLTITQAVIFCNTKRKVDWLTEKMREANFTVSSMHGDMPQKERESIMKEFRSGASRVLISTDVWARGLDVPQVSLIINYDLPNNRELYIHRIGRSGRYGRKGVAINFVKNDDIRILRDIEQYYSTQIDEMPMNVADLI.

Met1 is modified (N-acetylmethionine). At Ala2 the chain carries N-acetylalanine; in Eukaryotic initiation factor 4A-III, N-terminally processed. A phosphoserine mark is found at Ser10 and Ser12. Residue Lys19 forms a Glycyl lysine isopeptide (Lys-Gly) (interchain with G-Cter in SUMO2) linkage. The Q motif motif lies at 38–66 (PTFDTMGLREDLLRGIYAYGFEKPSAIQQ). Residues Lys60, Gln65, and 85–90 (GTGKTA) contribute to the ATP site. The Helicase ATP-binding domain occupies 69–239 (IKQIIKGRDV…NKFMTDPIRI (171 aa)). N6-acetyllysine is present on Lys124. Lys152 participates in a covalent cross-link: Glycyl lysine isopeptide (Lys-Gly) (interchain with G-Cter in SUMO2). Phosphothreonine is present on Thr163. The short motif at 187–190 (DEAD) is the DEAD box element. N6-acetyllysine occurs at positions 198 and 296. The 162-residue stretch at 250-411 (GIKQFFVAVE…EMPMNVADLI (162 aa)) folds into the Helicase C-terminal domain. Lys314 participates in a covalent cross-link: Glycyl lysine isopeptide (Lys-Gly) (interchain with G-Cter in SUMO2). Residue Lys321 is modified to N6-acetyllysine. Residues Asp342 and 367–371 (RSGRY) each bind ATP. Residues Lys374 and Lys382 each participate in a glycyl lysine isopeptide (Lys-Gly) (interchain with G-Cter in SUMO2) cross-link.

Belongs to the DEAD box helicase family. eIF4A subfamily. In terms of assembly, identified in the spliceosome C complex. Core component of the mRNA splicing-dependent exon junction complex (EJC); the core complex contains CASC3, EIF4A3, MAGOH or MAGOHB, and RBM8A. Interacts with CASC3, MAGOH, NXF1, RBM8A and ALYREF/THOC4. Component of the ALYREF/THOC4-EJC-RNA complex; in the complex interacts with MAGOH, RBM8A and THOC4 (via the WXHD motif); these interactions are likely specific to RNA-bound EJC. May interact with NOM1. Interacts with POLDIP3. Interacts with CWC22 and PRPF19 in an RNA-independent manner. Direct interaction with CWC22 is mediated by the helicase C-terminal domain. Full interaction with CWC22 occurs only when EIF4A3 is not part of the EJC and prevents EIF4A3 binding to RNA. Identified in a complex composed of the EJC core, UPF3B and UPF2. The EJC core can also interact with UPF3A (in vitro). Interacts with NCBP3. Interacts with NRDE2. Interacts with DHX34; the interaction is RNA-independent.

Its subcellular location is the nucleus. It is found in the nucleus speckle. The protein resides in the cytoplasm. The catalysed reaction is ATP + H2O = ADP + phosphate + H(+). The ATPase activity is increased some 4-fold in the presence of RNA. Its function is as follows. ATP-dependent RNA helicase. Involved in pre-mRNA splicing as component of the spliceosome. Core component of the splicing-dependent multiprotein exon junction complex (EJC) deposited at splice junctions on mRNAs. The EJC is a dynamic structure consisting of core proteins and several peripheral nuclear and cytoplasmic associated factors that join the complex only transiently either during EJC assembly or during subsequent mRNA metabolism. The EJC marks the position of the exon-exon junction in the mature mRNA for the gene expression machinery and the core components remain bound to spliced mRNAs throughout all stages of mRNA metabolism thereby influencing downstream processes including nuclear mRNA export, subcellular mRNA localization, translation efficiency and nonsense-mediated mRNA decay (NMD). Its RNA-dependent ATPase and RNA-helicase activities are induced by CASC3, but abolished in presence of the MAGOH-RBM8A heterodimer, thereby trapping the ATP-bound EJC core onto spliced mRNA in a stable conformation. The inhibition of ATPase activity by the MAGOH-RBM8A heterodimer increases the RNA-binding affinity of the EJC. Involved in translational enhancement of spliced mRNAs after formation of the 80S ribosome complex. Binds spliced mRNA in sequence-independent manner, 20-24 nucleotides upstream of mRNA exon-exon junctions. Shows higher affinity for single-stranded RNA in an ATP-bound core EJC complex than after the ATP is hydrolyzed. Involved in the splicing modulation of BCL2L1/Bcl-X (and probably other apoptotic genes); specifically inhibits formation of proapoptotic isoforms; the function is different from the established EJC assembly. Involved in craniofacial development. The sequence is that of Eukaryotic initiation factor 4A-III (Eif4a3) from Mus musculus (Mouse).